The sequence spans 382 residues: Galactokinase (382 aa).

34–37 (EHTD) lines the substrate pocket. Residue 124–130 (GAGLSSS) participates in ATP binding. 2 residues coordinate Mg(2+): serine 130 and glutamate 162. Catalysis depends on aspartate 174, which acts as the Proton acceptor. Tyrosine 223 contacts substrate.

Belongs to the GHMP kinase family. GalK subfamily.

The protein localises to the cytoplasm. It catalyses the reaction alpha-D-galactose + ATP = alpha-D-galactose 1-phosphate + ADP + H(+). It functions in the pathway carbohydrate metabolism; galactose metabolism. Catalyzes the transfer of the gamma-phosphate of ATP to D-galactose to form alpha-D-galactose-1-phosphate (Gal-1-P). The protein is Galactokinase of Shigella boydii serotype 18 (strain CDC 3083-94 / BS512).